We begin with the raw amino-acid sequence, 234 residues long: STARD3 N-terminal-like protein (234 aa).

Met1 carries the post-translational modification N-acetylmethionine. The Cytoplasmic portion of the chain corresponds to 1 to 53 (MNHLPEDMENALTGSQSSHASLRNIHSINPTQLMARIESYEGREKKGISDVRR). A phosphoserine mark is found at Ser15, Ser21, and Ser27. One can recognise an MENTAL domain in the interval 48 to 218 (ISDVRRTFCL…YSPPESEAGS (171 aa)). The chain crosses the membrane as a helical span at residues 54–74 (TFCLFVTFDLLFVTLLWIIEL). The Extracellular portion of the chain corresponds to 75-97 (NVNGGIENTLEKEVMQYDYYSSY). Residues 98 to 118 (FDIFLLAVFRFKVLILAYAVC) traverse the membrane as a helical segment. The Cytoplasmic portion of the chain corresponds to 119 to 122 (RLRH). The helical transmembrane segment at 123–143 (WWAIALTTAVTSAFLLAKVIL) threads the bilayer. Residues 144–150 (SKLFSQG) are Extracellular-facing. A helical membrane pass occupies residues 151–171 (AFGYVLPIISFILAWIETWFL). Residues 172–234 (DFKVLPQEAE…QDSEKPLLEL (63 aa)) lie on the Cytoplasmic side of the membrane. Ser193 bears the Phosphoserine mark. Positions 200–234 (PGGLSDGQFYSPPESEAGSEEAEEKQDSEKPLLEL) are disordered. The FFAT signature appears at 208–213 (FYSPPE). Positions 224-234 (KQDSEKPLLEL) are enriched in basic and acidic residues.

The protein belongs to the STARD3 family. Homodimer. Interacts (via the MENTAL domain) with STARD3NL. Interacts (via FFAT motif) with VAPA. Interacts (via FFAT motif) with VAPB. Interacts (via FFAT motif) with MOSPD2 (via MSP domain).

It is found in the late endosome membrane. In terms of biological role, tethering protein that creates contact site between the endoplasmic reticulum and late endosomes: localizes to late endosome membranes and contacts the endoplasmic reticulum via interaction with VAPA and VAPB. This Homo sapiens (Human) protein is STARD3 N-terminal-like protein.